Reading from the N-terminus, the 352-residue chain is Thiamine-phosphate synthase (352 aa).

The unknown stretch occupies residues 1 to 128 (MNPTPSETSL…AAEAAAIRYG (128 aa)). The disordered stretch occupies residues 63–85 (SYKQARSTSTDTGAGLKHPAQLD). Positions 129–352 (LYDLEVTCLN…LLQQLDQATI (224 aa)) are thiamine-phosphate synthase. 4-amino-2-methyl-5-(diphosphooxymethyl)pyrimidine is bound by residues 180–184 (QYRCK) and Asn212. The Mg(2+) site is built by Asp213 and Asp232. 2 residues coordinate 4-amino-2-methyl-5-(diphosphooxymethyl)pyrimidine: Ser251 and Lys280. Residue Gly307 coordinates 2-[(2R,5Z)-2-carboxy-4-methylthiazol-5(2H)-ylidene]ethyl phosphate.

The protein belongs to the thiamine-phosphate synthase family. Mg(2+) serves as cofactor.

The enzyme catalyses 2-[(2R,5Z)-2-carboxy-4-methylthiazol-5(2H)-ylidene]ethyl phosphate + 4-amino-2-methyl-5-(diphosphooxymethyl)pyrimidine + 2 H(+) = thiamine phosphate + CO2 + diphosphate. It catalyses the reaction 2-(2-carboxy-4-methylthiazol-5-yl)ethyl phosphate + 4-amino-2-methyl-5-(diphosphooxymethyl)pyrimidine + 2 H(+) = thiamine phosphate + CO2 + diphosphate. The catalysed reaction is 4-methyl-5-(2-phosphooxyethyl)-thiazole + 4-amino-2-methyl-5-(diphosphooxymethyl)pyrimidine + H(+) = thiamine phosphate + diphosphate. The protein operates within cofactor biosynthesis; thiamine diphosphate biosynthesis; thiamine phosphate from 4-amino-2-methyl-5-diphosphomethylpyrimidine and 4-methyl-5-(2-phosphoethyl)-thiazole: step 1/1. Condenses 4-methyl-5-(beta-hydroxyethyl)thiazole monophosphate (THZ-P) and 2-methyl-4-amino-5-hydroxymethyl pyrimidine pyrophosphate (HMP-PP) to form thiamine monophosphate (TMP). The sequence is that of Thiamine-phosphate synthase from Synechococcus sp. (strain CC9605).